The sequence spans 250 residues: Proteasome subunit alpha type-4-2 (250 aa).

In terms of assembly, the 26S proteasome consists of a 20S proteasome core and two 19S regulatory subunits. The 20S proteasome core is composed of 28 subunits that are arranged in four stacked rings, resulting in a barrel-shaped structure. The two end rings are each formed by seven alpha subunits, and the two central rings are each formed by seven beta subunits. The catalytic chamber with the active sites is on the inside of the barrel.

The protein localises to the cytoplasm. The protein resides in the nucleus. Its function is as follows. The proteasome is a multicatalytic proteinase complex which is characterized by its ability to cleave peptides with Arg, Phe, Tyr, Leu, and Glu adjacent to the leaving group at neutral or slightly basic pH. The proteasome has an ATP-dependent proteolytic activity. This is Proteasome subunit alpha type-4-2 from Oryza sativa subsp. indica (Rice).